Consider the following 213-residue polypeptide: tRNA (guanine-N(7)-)-methyltransferase (213 aa).

Positions 44, 69, 96, and 119 each coordinate S-adenosyl-L-methionine. The active site involves D119. The substrate site is built by K123 and D155.

Belongs to the class I-like SAM-binding methyltransferase superfamily. TrmB family.

The catalysed reaction is guanosine(46) in tRNA + S-adenosyl-L-methionine = N(7)-methylguanosine(46) in tRNA + S-adenosyl-L-homocysteine. It participates in tRNA modification; N(7)-methylguanine-tRNA biosynthesis. In terms of biological role, catalyzes the formation of N(7)-methylguanine at position 46 (m7G46) in tRNA. The protein is tRNA (guanine-N(7)-)-methyltransferase of Thermosynechococcus vestitus (strain NIES-2133 / IAM M-273 / BP-1).